Consider the following 206-residue polypeptide: LOB domain-containing protein 35 (206 aa).

The LOB domain occupies 4 to 105 (TCCSACKVMK…EQINSAKNEL (102 aa)). The disordered stretch occupies residues 184-206 (ASTSGGTSATQKTLPFPQNHNQP).

The protein belongs to the LOB domain-containing protein family.

The polypeptide is LOB domain-containing protein 35 (LBD35) (Arabidopsis thaliana (Mouse-ear cress)).